The sequence spans 645 residues: E3 ubiquitin-protein ligase ORTHRUS 2 (645 aa).

A PHD-type zinc finger spans residues Asp12–Glu63. A disordered region spans residues Leu96–Asn133. An RING-type 1 zinc finger spans residues Cys146–Arg185. A YDG domain is found at Val273 to Arg422. The RING-type 2 zinc finger occupies Cys518 to Pro575. Residues Gln583–Glu613 adopt a coiled-coil conformation. The disordered stretch occupies residues Lys599 to Arg645. Positions Glu603 to Ser625 are enriched in acidic residues. The span at Glu626 to Thr636 shows a compositional bias: basic and acidic residues.

As to quaternary structure, interacts with histones CENH3, HTB2, HTR3 and H4. As to expression, mostly expressed in inflorescence and, to a lower extent, in leaves.

It is found in the nucleus. It catalyses the reaction S-ubiquitinyl-[E2 ubiquitin-conjugating enzyme]-L-cysteine + [acceptor protein]-L-lysine = [E2 ubiquitin-conjugating enzyme]-L-cysteine + N(6)-ubiquitinyl-[acceptor protein]-L-lysine.. It participates in protein modification; protein ubiquitination. In terms of biological role, E3 ubiquitin-protein ligase. Participates in CpG methylation-dependent transcriptional regulation and epigenetic transcriptional silencing. Mediates ubiquitination with the E2 ubiquitin-conjugating enzyme UBC11. Promotes methylation-mediated gene silencing leading, for example, to early flowering. Associates with methylated DNA, and can bind to CpG, CpNpG, and CpNpN DNA motifs, with a strong preference for methylated forms, and with highest affinity for CpG substrate. Probably acts at the DNA methylation?histone interface to maintain centromeric heterochromatin. The chain is E3 ubiquitin-protein ligase ORTHRUS 2 (ORTH2) from Arabidopsis thaliana (Mouse-ear cress).